Reading from the N-terminus, the 453-residue chain is Phosphomannomutase (453 aa).

S96 serves as the catalytic Phosphoserine intermediate. S96, D243, D245, and D247 together coordinate Mg(2+).

Belongs to the phosphohexose mutase family. It depends on Mg(2+) as a cofactor.

The enzyme catalyses alpha-D-mannose 1-phosphate = D-mannose 6-phosphate. The protein operates within nucleotide-sugar biosynthesis; GDP-alpha-D-mannose biosynthesis; alpha-D-mannose 1-phosphate from D-fructose 6-phosphate: step 2/2. Its pathway is bacterial outer membrane biogenesis; LPS O-antigen biosynthesis. Its function is as follows. Involved in GDP-mannose biosynthesis which serves as the activated sugar nucleotide precursor for mannose residues in cell surface polysaccharides. This enzyme participates in synthesis of the LPS O7 antigen. This chain is Phosphomannomutase (manB), found in Escherichia coli.